A 20-amino-acid polypeptide reads, in one-letter code: Antifungal protein 2 large subunit (20 aa).

Positions 1–20 are disordered; the sequence is PEDPQRRYQEXQREXRXQQE.

Heterodimer of a large and a small subunit.

Possesses antifungal activity against P.infestans but not F.graminearum. This Malva parviflora (Little mallow) protein is Antifungal protein 2 large subunit.